Reading from the N-terminus, the 221-residue chain is UPF0502 protein CPS_0106 (221 aa).

This sequence belongs to the UPF0502 family.

In Colwellia psychrerythraea (strain 34H / ATCC BAA-681) (Vibrio psychroerythus), this protein is UPF0502 protein CPS_0106.